The primary structure comprises 142 residues: Small ribosomal subunit protein bS18m (142 aa).

This sequence belongs to the bacterial ribosomal protein bS18 family. Component of the mitochondrial small ribosomal subunit (mt-SSU). Mature mammalian 55S mitochondrial ribosomes consist of a small (28S) and a large (39S) subunit. The 28S small subunit contains a 12S ribosomal RNA (12S mt-rRNA) and 30 different proteins. The 39S large subunit contains a 16S rRNA (16S mt-rRNA), a copy of mitochondrial valine transfer RNA (mt-tRNA(Val)), which plays an integral structural role, and 52 different proteins. bS18m has a zinc binding site.

The protein resides in the mitochondrion. The protein is Small ribosomal subunit protein bS18m (MRPS18C) of Homo sapiens (Human).